Here is a 146-residue protein sequence, read N- to C-terminus: Hemoglobin subunit beta (146 aa).

V1 is subject to N-acetylvaline. The region spanning H2 to H146 is the Globin domain. T12 carries the phosphothreonine modification. Phosphoserine is present on S44. N6-acetyllysine is present on K59. H63 serves as a coordination point for heme b. An N6-acetyllysine modification is found at K82. H92 is a heme b binding site. An S-nitrosocysteine modification is found at C93. N6-acetyllysine is present on K144.

The protein belongs to the globin family. As to quaternary structure, heterotetramer of two alpha chains and two beta chains. In terms of tissue distribution, red blood cells.

Functionally, involved in oxygen transport from the lung to the various peripheral tissues. The sequence is that of Hemoglobin subunit beta (HBB) from Chlorocebus aethiops (Green monkey).